A 447-amino-acid chain; its full sequence is Ribosomal protein uS12 methylthiotransferase RimO (447 aa).

Residues 4–114 enclose the MTTase N-terminal domain; the sequence is PKVGFVSLGC…VMEAVHEYVP (111 aa). [4Fe-4S] cluster contacts are provided by cysteine 13, cysteine 49, cysteine 78, cysteine 147, cysteine 151, and cysteine 154. A Radical SAM core domain is found at 133–370; the sequence is LTPKHYAYLK…MQVQQQISAA (238 aa). Residues 373–443 form the TRAM domain; it reads QKRIGQTMTV…EYDLFAKLIK (71 aa).

It belongs to the methylthiotransferase family. RimO subfamily. It depends on [4Fe-4S] cluster as a cofactor.

The protein localises to the cytoplasm. It catalyses the reaction L-aspartate(89)-[ribosomal protein uS12]-hydrogen + (sulfur carrier)-SH + AH2 + 2 S-adenosyl-L-methionine = 3-methylsulfanyl-L-aspartate(89)-[ribosomal protein uS12]-hydrogen + (sulfur carrier)-H + 5'-deoxyadenosine + L-methionine + A + S-adenosyl-L-homocysteine + 2 H(+). Functionally, catalyzes the methylthiolation of an aspartic acid residue of ribosomal protein uS12. In Acinetobacter baumannii (strain SDF), this protein is Ribosomal protein uS12 methylthiotransferase RimO.